Consider the following 615-residue polypeptide: MALLQIAEPGQSAAPHQHKRAVGIDLGTTNSLVAAVRSGQADTLCDEQGRDLLPSVVHYQADTIRVGVDAKREAALDPHNTIVSAKRMMGKALADIDTRQQPYQFVAADNGMPQLQTRQGLVNPVQVSAEILKKLAERGAAALGGDLDGVVITVPAYFDDAQRQGTKDAARLAGLHVLRLLNEPTAAAIAYGLDSGQEGVIAVYDLGGGTFDISILRLHRGVFEVMATGGDSALGGDDFDHLLADWLKEQAGLTGELDARLQRELLDVAAAVKHGLTDADAVPCTFAGWQGSVTRSQFDELIQPLVKRTLLACRRALRDAGLEQEEVLEVVMVGGSTRVPLVRELVGEFFQRPPLTSIDPDKVVAIGAAIQADILVGNKPDAEMLLLDVIPLSLGLETMGGLAEKVIPRNTTIPVARAQEFTTFKDGQTAMAIHVVQGERELVADCRSLARFTLTGIPPMVAGAAHIRVTFQVDADGLLSVSAMEKSSGVQAEIQVKPSYGLGEDDILNMLSASIANAQQDMDARMLAEQQVEADRVVESLNAALAADGEALLSPAERAELDAAIAHLLTMRSTGTTNQIKEAIEAADAASGEFAARRMDASIRKVLTGQNVNKV.

The protein belongs to the heat shock protein 70 family.

In terms of biological role, chaperone involved in the maturation of iron-sulfur cluster-containing proteins. Has a low intrinsic ATPase activity which is markedly stimulated by HscB. In Aeromonas hydrophila subsp. hydrophila (strain ATCC 7966 / DSM 30187 / BCRC 13018 / CCUG 14551 / JCM 1027 / KCTC 2358 / NCIMB 9240 / NCTC 8049), this protein is Chaperone protein HscA homolog.